We begin with the raw amino-acid sequence, 883 residues long: Alanine--tRNA ligase (883 aa).

Zn(2+)-binding residues include His-570, His-574, Cys-672, and His-676.

It belongs to the class-II aminoacyl-tRNA synthetase family. It depends on Zn(2+) as a cofactor.

The protein resides in the cytoplasm. The catalysed reaction is tRNA(Ala) + L-alanine + ATP = L-alanyl-tRNA(Ala) + AMP + diphosphate. Its function is as follows. Catalyzes the attachment of alanine to tRNA(Ala) in a two-step reaction: alanine is first activated by ATP to form Ala-AMP and then transferred to the acceptor end of tRNA(Ala). Also edits incorrectly charged Ser-tRNA(Ala) and Gly-tRNA(Ala) via its editing domain. This chain is Alanine--tRNA ligase, found in Heliobacterium modesticaldum (strain ATCC 51547 / Ice1).